Reading from the N-terminus, the 221-residue chain is Protein-L-isoaspartate O-methyltransferase (221 aa).

The active site involves Ser57.

The protein belongs to the methyltransferase superfamily. L-isoaspartyl/D-aspartyl protein methyltransferase family.

The protein resides in the cytoplasm. The enzyme catalyses [protein]-L-isoaspartate + S-adenosyl-L-methionine = [protein]-L-isoaspartate alpha-methyl ester + S-adenosyl-L-homocysteine. In terms of biological role, catalyzes the methyl esterification of L-isoaspartyl residues in peptides and proteins that result from spontaneous decomposition of normal L-aspartyl and L-asparaginyl residues. It plays a role in the repair and/or degradation of damaged proteins. The chain is Protein-L-isoaspartate O-methyltransferase from Korarchaeum cryptofilum (strain OPF8).